The chain runs to 103 residues: ATP-dependent Clp protease adapter protein ClpS (103 aa).

Belongs to the ClpS family. Binds to the N-terminal domain of the chaperone ClpA.

Its function is as follows. Involved in the modulation of the specificity of the ClpAP-mediated ATP-dependent protein degradation. This is ATP-dependent Clp protease adapter protein ClpS from Nitrosomonas eutropha (strain DSM 101675 / C91 / Nm57).